Reading from the N-terminus, the 877-residue chain is Alanine--tRNA ligase (877 aa).

Zn(2+) contacts are provided by H565, H569, C667, and H671.

Belongs to the class-II aminoacyl-tRNA synthetase family. It depends on Zn(2+) as a cofactor.

Its subcellular location is the cytoplasm. The enzyme catalyses tRNA(Ala) + L-alanine + ATP = L-alanyl-tRNA(Ala) + AMP + diphosphate. Its function is as follows. Catalyzes the attachment of alanine to tRNA(Ala) in a two-step reaction: alanine is first activated by ATP to form Ala-AMP and then transferred to the acceptor end of tRNA(Ala). Also edits incorrectly charged Ser-tRNA(Ala) and Gly-tRNA(Ala) via its editing domain. The sequence is that of Alanine--tRNA ligase from Chromobacterium violaceum (strain ATCC 12472 / DSM 30191 / JCM 1249 / CCUG 213 / NBRC 12614 / NCIMB 9131 / NCTC 9757 / MK).